A 97-amino-acid polypeptide reads, in one-letter code: uncharacterized protein (97 aa).

Helical transmembrane passes span 7–27 (CIAP…IGLG), 34–54 (IPML…LMFS), and 69–89 (IVLY…PTIL).

Its subcellular location is the cell membrane. This is an uncharacterized protein from Haemophilus influenzae (strain ATCC 51907 / DSM 11121 / KW20 / Rd).